The sequence spans 494 residues: Transmembrane and coiled-coil domain-containing protein 6 (494 aa).

Residues 15-39 are a coiled coil; sequence GVEELRRRRREREAALRKARREQQL. 2 helical membrane-spanning segments follow: residues 338–358 and 386–406; these read LVAA…ALLP and PLLQ…TVLC.

The protein localises to the membrane. This chain is Transmembrane and coiled-coil domain-containing protein 6 (Tmco6), found in Mus musculus (Mouse).